The sequence spans 364 residues: Oxidized low-density lipoprotein receptor 1 (364 aa).

The interval 1 to 21 (MAFDDKMKPVNGQPDQKSCGK) is disordered. Topologically, residues 1-31 (MAFDDKMKPVNGQPDQKSCGKKPKGLHLLSS) are cytoplasmic. Residues 32–54 (TWWCPAAVTLAILCLVLSVTLIV) traverse the membrane as a helical; Signal-anchor for type II membrane protein segment. Residues C35 and C45 are each lipidated (S-palmitoyl cysteine). Positions 55–242 (QQTQLLQVSD…GPCPQDWIWH (188 aa)) are neck. Residues 55 to 364 (QQTQLLQVSD…QKKANLLLTQ (310 aa)) lie on the Extracellular side of the membrane. N-linked (GlcNAc...) asparagine glycans are attached at residues N72, N92, and N138. Residues 83-233 (QMSAQKKAEN…ALQRAANSSG (151 aa)) adopt a coiled-coil conformation. Tandem repeats lie at residues 96-141 (ESKR…NASE), 142-187 (ESKW…KYSE), and 188-233 (ESQR…NSSG). Cystine bridges form between C235-C246, C262-C354, and C333-C346. A C-type lectin domain is found at 242–355 (HKENCYLFHG…CILTAFSICQ (114 aa)).

As to quaternary structure, homodimer; disulfide-linked. May form a hexamer composed of 3 homodimers. Interacts with HSP70. Post-translationally, N-glycosylated. Predominantly expressed in lung and at lower level in kidney. Expressed in macrophages but not in vascular smooth muscle cells.

The protein localises to the cell membrane. The protein resides in the membrane raft. It is found in the secreted. Its function is as follows. Receptor that mediates the recognition, internalization and degradation of oxidatively modified low density lipoprotein (oxLDL) by vascular endothelial cells. OxLDL is a marker of atherosclerosis that induces vascular endothelial cell activation and dysfunction, resulting in pro-inflammatory responses, pro-oxidative conditions and apoptosis. Its association with oxLDL induces the activation of NF-kappa-B through an increased production of intracellular reactive oxygen and a variety of pro-atherogenic cellular responses including a reduction of nitric oxide (NO) release, monocyte adhesion and apoptosis. In addition to binding oxLDL, it acts as a receptor for the HSP70 protein involved in antigen cross-presentation to naive T-cells in dendritic cells, thereby participating in cell-mediated antigen cross-presentation. Also involved in inflammatory process, by acting as a leukocyte-adhesion molecule at the vascular interface in endotoxin-induced inflammation. Also acts as a receptor for advanced glycation end (AGE) products, activated platelets, monocytes, apoptotic cells and both Gram-negative and Gram-positive bacteria. This is Oxidized low-density lipoprotein receptor 1 (Olr1) from Rattus norvegicus (Rat).